A 415-amino-acid polypeptide reads, in one-letter code: Gamma-glutamyl phosphate reductase (415 aa).

This sequence belongs to the gamma-glutamyl phosphate reductase family.

It is found in the cytoplasm. It carries out the reaction L-glutamate 5-semialdehyde + phosphate + NADP(+) = L-glutamyl 5-phosphate + NADPH + H(+). It participates in amino-acid biosynthesis; L-proline biosynthesis; L-glutamate 5-semialdehyde from L-glutamate: step 2/2. In terms of biological role, catalyzes the NADPH-dependent reduction of L-glutamate 5-phosphate into L-glutamate 5-semialdehyde and phosphate. The product spontaneously undergoes cyclization to form 1-pyrroline-5-carboxylate. This Xylella fastidiosa (strain 9a5c) protein is Gamma-glutamyl phosphate reductase.